The chain runs to 28 residues: 3-phytase B (28 aa).

The interval 1 to 28 is disordered; sequence RDPTGCEVDQVIMVKRHGERYPSPSAGK. His17 acts as the Nucleophile in catalysis.

The protein belongs to the histidine acid phosphatase family.

The catalysed reaction is 1D-myo-inositol hexakisphosphate + H2O = 1D-myo-inositol 1,2,4,5,6-pentakisphosphate + phosphate. Functionally, catalyzes the hydrolysis of inorganic orthophosphate from phytate. The protein is 3-phytase B (phyB) of Aspergillus ficuum.